Reading from the N-terminus, the 648-residue chain is Rab11 family-interacting protein 1 (648 aa).

Residues 1-129 (MSLAASAGRG…DQSRRKKQWY (129 aa)) form the C2 domain. A compositionally biased stretch (basic and acidic residues) spans 164–188 (SMKDKSRNPFGKLKDKIKGKNKDNT). Disordered stretches follow at residues 164–470 (SMKD…GRKG), 483–503 (VRRP…SQNP), and 516–555 (VESK…PKIT). A compositionally biased stretch (polar residues) spans 189 to 201 (SDTASAIVPSTTP). Residues S205, S209, and S237 each carry the phosphoserine modification. Polar residues-rich tracts occupy residues 227–242 (PSLQ…SVLP) and 271–296 (SSAS…SNFS). Residues S304, S319, S343, S345, S347, S349, S360, S361, and S386 each carry the phosphoserine modification. The segment covering 314-323 (DSLSRSNVCI) has biased composition (polar residues). 2 stretches are compositionally biased toward basic and acidic residues: residues 381-394 (SDRR…KDSM) and 422-436 (ATKE…ESKK). At S438 the chain carries Phosphoserine. A compositionally biased stretch (basic and acidic residues) spans 445–454 (GKKDVAKGSE). Residues 576-638 (KKYQPSDPAF…EETPNILRVP (63 aa)) enclose the FIP-RBD domain. A necessary for interaction with RAB4A and RAB11A, subcellular location and endosomal recycling region spans residues 584-648 (AFAYAQLTHD…AQTGKKAGKM (65 aa)).

As to quaternary structure, homooligomer. Interacts with RAB11A, RAB11B, RAB25, RAB4A and RAB14.

Its subcellular location is the recycling endosome. It is found in the cytoplasmic vesicle. In terms of biological role, a Rab11 effector protein involved in the endosomal recycling process. Also involved in controlling membrane trafficking along the phagocytic pathway and in phagocytosis. Interaction with RAB14 may function in the process of neurite formation. This chain is Rab11 family-interacting protein 1, found in Rattus norvegicus (Rat).